Here is a 353-residue protein sequence, read N- to C-terminus: UPF0658 Golgi apparatus membrane protein C23H3.04 (353 aa).

Helical transmembrane passes span 39–59 (IFFL…EGYC), 76–96 (SLPI…YLCV), 103–123 (NIIE…YSIV), 172–192 (PFLI…GFLA), 226–246 (LLKI…MVLP), 249–269 (AVVE…ILTL), 281–301 (LMMT…FKII), and 318–338 (MITT…AIGF).

This sequence belongs to the UPF0658 family.

Its subcellular location is the golgi apparatus membrane. The protein is UPF0658 Golgi apparatus membrane protein C23H3.04 of Schizosaccharomyces pombe (strain 972 / ATCC 24843) (Fission yeast).